A 287-amino-acid chain; its full sequence is Cbb3-type cytochrome c oxidase subunit FixP (287 aa).

At 1 to 33 (MSQKHIDELSGVETTGHEWDGIQELNNPMPRWW) the chain is on the cytoplasmic side. A helical membrane pass occupies residues 34–54 (IWTFYVTILWAIGYAIAYPAI). Residues 55 to 287 (PMITSATNGY…IFVHALGGGT (233 aa)) lie on the Periplasmic side of the membrane. Cytochrome c domains follow at residues 108 to 196 (FAIA…WGLT) and 203 to 284 (GLAA…HALG). Positions 121, 124, 125, 173, 216, 219, 220, and 261 each coordinate heme c.

This sequence belongs to the CcoP / FixP family. Component of the cbb3-type cytochrome c oxidase at least composed of FixN, FixO, FixQ and FixP. It depends on heme c as a cofactor.

The protein resides in the cell inner membrane. The protein operates within energy metabolism; oxidative phosphorylation. Functionally, C-type cytochrome. Part of the cbb3-type cytochrome c oxidase complex. FixP subunit is required for transferring electrons from donor cytochrome c via its heme groups to FixO subunit. From there, electrons are shuttled to the catalytic binuclear center of FixN subunit where oxygen reduction takes place. The complex also functions as a proton pump. The chain is Cbb3-type cytochrome c oxidase subunit FixP from Rhizobium etli (strain ATCC 51251 / DSM 11541 / JCM 21823 / NBRC 15573 / CFN 42).